The sequence spans 265 residues: Apolipoprotein A-I (265 aa).

An N-terminal signal peptide occupies residues 1-18 (MKAVVLTLAVLFLTGSQA). 2 repeat units span residues 67-88 (LKLLDNWDSLTSTFAKVREQLG) and 89-110 (PVTREFWDNLEKETESLRQEMN). Positions 67 to 265 (LKLLDNWDSL…DEASKKLNAQ (199 aa)) are 10 X approximate tandem repeats. Met-109 bears the Methionine sulfoxide mark. The 3; half-length repeat unit spans residues 111 to 121 (KDLQEVKQKVQ). 5 consecutive repeat copies span residues 122–142 (PYLDEFQKKWQEELQIYRQKV), 144–165 (PLGEELREGARQKVQELQDKLT), 166–187 (PLAEEMRDRARAHVETLRQQLA), 188–209 (PYSDELRQRMAARFEMLKEGGG), and 210–230 (SLVQYHAKASEQLKALGEKAK). The stretch at 231-241 (PALEDLRQGLL) is one 9; half-length repeat. Repeat unit 10 spans residues 242–265 (PVLENLKVSILAAIDEASKKLNAQ).

Belongs to the apolipoprotein A1/A4/E family. In terms of assembly, homodimer. Interacts with APOA1BP and CLU. Component of a sperm activating protein complex (SPAP), consisting of APOA1, an immunoglobulin heavy chain, an immunoglobulin light chain and albumin. Interacts with NDRG1. Interacts with SCGB3A2. Interacts with NAXE and YJEFN3. In terms of processing, glycosylated. Palmitoylated. Post-translationally, phosphorylation sites are present in the extracellular medium. As to expression, major protein of plasma HDL, also found in chylomicrons.

The protein localises to the secreted. In terms of biological role, participates in the reverse transport of cholesterol from tissues to the liver for excretion by promoting cholesterol efflux from tissues and by acting as a cofactor for the lecithin cholesterol acyltransferase (LCAT). As part of the SPAP complex, activates spermatozoa motility. The chain is Apolipoprotein A-I (APOA1) from Balaenoptera acutorostrata scammoni (North Pacific minke whale).